The chain runs to 677 residues: UvrABC system protein B (677 aa).

The 388-residue stretch at 25–412 (DGVNSGREYQ…SGAIIEQVIR (388 aa)) folds into the Helicase ATP-binding domain. Residue 38 to 45 (GATGTGKT) participates in ATP binding. Residues 91–114 (YYDYYQPEAYVPVSDTYIAKTSSI) carry the Beta-hairpin motif. Positions 429 to 591 (QVEDLLDEIR…IVPMPAGKKA (163 aa)) constitute a Helicase C-terminal domain. One can recognise a UVR domain in the interval 639 to 674 (PQLIDELETKMKKSAKDLDFENAAKLRDKIHQLRKK).

This sequence belongs to the UvrB family. As to quaternary structure, forms a heterotetramer with UvrA during the search for lesions. Interacts with UvrC in an incision complex.

Its subcellular location is the cytoplasm. Its function is as follows. The UvrABC repair system catalyzes the recognition and processing of DNA lesions. A damage recognition complex composed of 2 UvrA and 2 UvrB subunits scans DNA for abnormalities. Upon binding of the UvrA(2)B(2) complex to a putative damaged site, the DNA wraps around one UvrB monomer. DNA wrap is dependent on ATP binding by UvrB and probably causes local melting of the DNA helix, facilitating insertion of UvrB beta-hairpin between the DNA strands. Then UvrB probes one DNA strand for the presence of a lesion. If a lesion is found the UvrA subunits dissociate and the UvrB-DNA preincision complex is formed. This complex is subsequently bound by UvrC and the second UvrB is released. If no lesion is found, the DNA wraps around the other UvrB subunit that will check the other stand for damage. This is UvrABC system protein B from Prochlorococcus marinus (strain SARG / CCMP1375 / SS120).